Reading from the N-terminus, the 775-residue chain is tRNA(Met) cytidine acetyltransferase TmcA (775 aa).

Disordered stretches follow at residues 1–33 and 191–215; these read MPTT…GMDI and TVEQ…PTDA. Residues 199-212 show a composition bias toward pro residues; that stretch reads DPPPSRPVPSPTPP. ATP contacts are provided by residues Q230, 254 to 263, and R403; that span reads GRGKSSAAGL. An N-acetyltransferase domain is found at 438-623; the sequence is VEYRQLSAAD…YSVVMLDPCS (186 aa). Residues 549-551, 556-562, and E588 each bind acetyl-CoA; these read IAT and RSRGLGS.

The protein belongs to the RNA cytidine acetyltransferase family. TmcA subfamily.

Its subcellular location is the cytoplasm. It carries out the reaction cytidine(34) in elongator tRNA(Met) + acetyl-CoA + ATP + H2O = N(4)-acetylcytidine(34) in elongator tRNA(Met) + ADP + phosphate + CoA + H(+). Functionally, catalyzes the formation of N(4)-acetylcytidine (ac(4)C) at the wobble position of tRNA(Met), by using acetyl-CoA as an acetyl donor and ATP (or GTP). The sequence is that of tRNA(Met) cytidine acetyltransferase TmcA from Haloarcula marismortui (strain ATCC 43049 / DSM 3752 / JCM 8966 / VKM B-1809) (Halobacterium marismortui).